The chain runs to 258 residues: Probable endonuclease LCL3 (258 aa).

Residues 12 to 34 (VLIEAGLLSLVLTGTTLATYRGY) form a helical membrane-spanning segment. Residues 55-245 (RWLYGKVTAV…KSKRIGMWSQ (191 aa)) form the TNase-like domain. The active site involves Arg136. Asp141 lines the Ca(2+) pocket. Catalysis depends on residues Glu144 and Arg184.

This sequence belongs to the LCL3 family.

It localises to the mitochondrion. The protein localises to the membrane. The polypeptide is Probable endonuclease LCL3 (LCL3) (Nakaseomyces delphensis (Yeast)).